The following is a 383-amino-acid chain: MSPEIALNRISPMLSPFISSVVRNGKVGLDATNCLRITDLKSGCTSLTPGPNCDRFKLHIPYAGETLKWDIIFNAQYPELPPDFIFGEDAEFLPDPSALHNLASWNPSNPECLLLVVKELVQQYHQFQCGRLRESSRLMFEYQTLLEEPQYGENMEIYAGKKNNWTGEFSARFLLKLPVDFSNIPTYLLKDVNEDPGEDVALLSVSFEDTEATQVYPKLYLSPRIEHALGGSSALHIPAFPGGGCLIDYVPQVCHLLTNKVQYVIQGYHKRREYIAAFLSHFGTGVVEYDAEGFTKLTLLLMWKEFCFLVHIDLPLFFPRDQPTLTFQSVYHFTNSGQLYSQAQKNYPYSPRWDGNEMAKRAKAYFKTFVPQFQEAAFANGKL.

N-acetylmethionine is present on M1. A Phosphoserine modification is found at S2. UEV-like stretches follow at residues 30–147 (DATN…TLLE) and 275–364 (IAAF…RAKA).

Belongs to the BABAM2 family. Component of the ARISC complex, at least composed of UIMC1/RAP80, ABRAXAS1, BRCC3/BRCC36, BABAM2 and BABAM1/NBA1. Component of the BRCA1-A complex, at least composed of BRCA1, BARD1, UIMC1/RAP80, ABRAXAS1, BRCC3/BRCC36, BABAM2 and BABAM1/NBA1. In the BRCA1-A complex, interacts directly with ABRAXAS1, BRCC3/BRCC36 and BABAM1/NBA1. Binds polyubiquitin. Component of the BRISC complex, at least composed of ABRAXAS2, BRCC3/BRCC36, BABAM2 and BABAM1/NBA1. Identified in a complex with SHMT2 and the other subunits of the BRISC complex. Component of the BRCA1/BRCA2 containing complex (BRCC), which also contains BRCA1, BRCA2, BARD1, BRCC3/BRCC36 and RAD51. BRCC is a ubiquitin E3 ligase complex that enhances cellular survival following DNA damage. May interact with FAS and TNFRSF1A.

The protein localises to the cytoplasm. It localises to the nucleus. Component of the BRCA1-A complex, a complex that specifically recognizes 'Lys-63'-linked ubiquitinated histones H2A and H2AX at DNA lesions sites, leading to target the BRCA1-BARD1 heterodimer to sites of DNA damage at double-strand breaks (DSBs). The BRCA1-A complex also possesses deubiquitinase activity that specifically removes 'Lys-63'-linked ubiquitin on histones H2A and H2AX. In the BRCA1-A complex, it acts as an adapter that bridges the interaction between BABAM1/NBA1 and the rest of the complex, thereby being required for the complex integrity and modulating the E3 ubiquitin ligase activity of the BRCA1-BARD1 heterodimer. Component of the BRISC complex, a multiprotein complex that specifically cleaves 'Lys-63'-linked ubiquitin in various substrates. Within the BRISC complex, acts as an adapter that bridges the interaction between BABAM1/NBA1 and the rest of the complex, thereby being required for the complex integrity. The BRISC complex is required for normal mitotic spindle assembly and microtubule attachment to kinetochores via its role in deubiquitinating NUMA1. The BRISC complex plays a role in interferon signaling via its role in the deubiquitination of the interferon receptor IFNAR1; deubiquitination increases IFNAR1 activity by enhancing its stability and cell surface expression. Down-regulates the response to bacterial lipopolysaccharide (LPS) via its role in IFNAR1 deubiquitination. May play a role in homeostasis or cellular differentiation in cells of neural, epithelial and germline origins. May also act as a death receptor-associated anti-apoptotic protein, which inhibits the mitochondrial apoptotic pathway. May regulate TNF-alpha signaling through its interactions with TNFRSF1A; however these effects may be indirect. The sequence is that of BRISC and BRCA1-A complex member 2 from Rattus norvegicus (Rat).